The sequence spans 255 residues: Triosephosphate isomerase (255 aa).

Substrate is bound at residue 9-11 (NWK). The Electrophile role is filled by histidine 100. The Proton acceptor role is filled by glutamate 169. Substrate-binding positions include glycine 175, serine 208, and 229-230 (GG).

The protein belongs to the triosephosphate isomerase family. Homodimer.

It localises to the cytoplasm. The enzyme catalyses D-glyceraldehyde 3-phosphate = dihydroxyacetone phosphate. The protein operates within carbohydrate biosynthesis; gluconeogenesis. It participates in carbohydrate degradation; glycolysis; D-glyceraldehyde 3-phosphate from glycerone phosphate: step 1/1. In terms of biological role, involved in the gluconeogenesis. Catalyzes stereospecifically the conversion of dihydroxyacetone phosphate (DHAP) to D-glyceraldehyde-3-phosphate (G3P). The polypeptide is Triosephosphate isomerase (Synechococcus sp. (strain JA-3-3Ab) (Cyanobacteria bacterium Yellowstone A-Prime)).